Here is a 425-residue protein sequence, read N- to C-terminus: Testicular acid phosphatase (425 aa).

Positions 1-27 are cleaved as a signal peptide; sequence MAEPGSQGHTVGPLLLLLLLLLPRALP. At 28-392 the chain is on the extracellular side; that stretch reads EGPLLFVALV…EPASPPATVP (365 aa). The active-site Nucleophile is His-40. Cystine bridges form between Cys-158-Cys-378, Cys-213-Cys-311, and Cys-353-Cys-357. Asp-288 (proton donor) is an active-site residue. Residues 393 to 413 traverse the membrane as a helical segment; it reads LLAGAVAVLAVLSLGLGLLAW. Over 414–425 the chain is Cytoplasmic; that stretch reads RPRCLRALGGTV.

It belongs to the histidine acid phosphatase family. Homodimer. Post-translationally, glycosylated.

The protein localises to the membrane. It carries out the reaction a phosphate monoester + H2O = an alcohol + phosphate. In terms of biological role, may dephosphorylate receptor tyrosine-protein kinase ERBB4 and inhibits its ligand-induced proteolytic cleavage. May play a role in odontogenesis. The chain is Testicular acid phosphatase from Mus musculus (Mouse).